The chain runs to 108 residues: Malonate decarboxylase acyl carrier protein (108 aa).

An O-(phosphoribosyl dephospho-coenzyme A)serine modification is found at serine 35.

It belongs to the MdcC family. Covalently binds the prosthetic group of malonate decarboxylase.

It is found in the cytoplasm. Subunit of malonate decarboxylase, it is an acyl carrier protein to which acetyl and malonyl thioester residues are bound via a 2'-(5''-phosphoribosyl)-3'-dephospho-CoA prosthetic group and turn over during the catalytic mechanism. The polypeptide is Malonate decarboxylase acyl carrier protein (Burkholderia cepacia (Pseudomonas cepacia)).